Consider the following 107-residue polypeptide: uncharacterized protein (107 aa).

Transmembrane regions (helical) follow at residues 20–40 (FISL…EVGI), 49–69 (PAIL…ISTV), and 86–106 (VVML…KLFL).

It localises to the membrane. This is an uncharacterized protein from Saccharomyces cerevisiae (strain ATCC 204508 / S288c) (Baker's yeast).